We begin with the raw amino-acid sequence, 486 residues long: Ribosome biogenesis protein YTM1 (486 aa).

Residues arginine 12–arginine 99 form a ubiquitin-like (UBL) domain region. WD repeat units follow at residues glycine 212–histidine 251, glycine 305–leucine 345, proline 349–serine 388, proline 392–phenylalanine 432, and valine 454–glutamate 486. The tract at residues threonine 249–proline 299 is disordered.

This sequence belongs to the WD repeat WDR12/YTM1 family. As to quaternary structure, component of the NOP7 complex, composed of ERB1, NOP7 and YTM1. The complex is held together by ERB1, which interacts with NOP7 via its N-terminal domain and with YTM1 via a high-affinity interaction between the seven-bladed beta-propeller domains of the 2 proteins. The NOP7 complex associates with the 66S pre-ribosome. Interacts (via UBL domain) with MDN1 (via VWFA/MIDAS domain).

The protein localises to the nucleus. It is found in the nucleolus. The protein resides in the nucleoplasm. In terms of biological role, component of the NOP7 complex, which is required for maturation of the 25S and 5.8S ribosomal RNAs and formation of the 60S ribosome. The protein is Ribosome biogenesis protein YTM1 of Cryptococcus neoformans var. neoformans serotype D (strain B-3501A) (Filobasidiella neoformans).